The sequence spans 285 residues: Energy-coupling factor transporter ATP-binding protein EcfA2 (285 aa).

One can recognise an ABC transporter domain in the interval 3 to 245; it reads INFEQVNFSY…DLVWFKTVAL (243 aa). 40–47 contributes to the ATP binding site; that stretch reads GQTGSGKS. Glutamate 171 (proton acceptor) is an active-site residue.

This sequence belongs to the ABC transporter superfamily. Energy-coupling factor EcfA family. In terms of assembly, forms a stable energy-coupling factor (ECF) transporter complex probably composed of 2 membrane-embedded substrate-binding proteins (S component), 2 ATP-binding proteins (A component) and 2 transmembrane proteins (T component). This complex interacts with a number of substrate-specific components, including FolT, PanT and RibU for 5-formyltetrahydrofolate, pantothenate and riboflavin respectively.

It is found in the cell membrane. ATP-binding (A) component of a common energy-coupling factor (ECF) ABC-transporter complex. Unlike classic ABC transporters this ECF transporter provides the energy necessary to transport a number of different substrates including 5-formyltetrahydrofolate, pantothenate and riboflavin. Expression of the complex plus FolT in E.coli allows 5-formyltetrahydrofolate uptake; 5-formyltetrahydrofolate is not taken up in the absence of FolT or the EcfA1A2T complex. This chain is Energy-coupling factor transporter ATP-binding protein EcfA2, found in Leuconostoc mesenteroides subsp. mesenteroides (strain ATCC 8293 / DSM 20343 / BCRC 11652 / CCM 1803 / JCM 6124 / NCDO 523 / NBRC 100496 / NCIMB 8023 / NCTC 12954 / NRRL B-1118 / 37Y).